The chain runs to 485 residues: MNNLRVRFAPSPTGAIHIGNIRTALFNYLFSRSEGATFVLRIEDTDLERSSKEFEELIFKELEWLGIEWDEGPDKPGPYGPYRQSERLEIYHKFAQKLIEEKKAYRCYCTPEELEEDRRKAVERGDIPRYSGRCRYLTKEQEEAFIREGRKPVIRFIIPDDEVIEFEDMIKGKITIKSDTLGGDMVIVKSDGMPTYNFAVVIDDALMKITHVIRGEDHIYNTPKQILIYKALGFEIPKFAHAPLILGPDRTKLSKRHGNTYIGQYRELGYLPEAMFNFLSLLSWSPEDNVEIMSKEEIIKKFNFRRIHSANPVFDIEKLNWMNQQYIQKSSIERIVDLAIPHLRRAGYIDGIDDMVYNWLKDVISLYKDGLQYVAQITEKAKMFFVEEVEYSDETVKILNSPNSKIVLEVVKKVIEEADEITEEYVKDLLKKLQKETKVKGKEFFMPIRVAITGEDHGPELVKIIPLLGKDKVINRLKKAINLIK.

Positions 10-20 match the 'HIGH' region motif; the sequence is PSPTGAIHIGN. The 'KMSKS' region signature appears at 252 to 256; it reads KLSKR. Lys255 serves as a coordination point for ATP.

The protein belongs to the class-I aminoacyl-tRNA synthetase family. Glutamate--tRNA ligase type 1 subfamily. Monomer.

Its subcellular location is the cytoplasm. The catalysed reaction is tRNA(Glu) + L-glutamate + ATP = L-glutamyl-tRNA(Glu) + AMP + diphosphate. Its function is as follows. Catalyzes the attachment of glutamate to tRNA(Glu) in a two-step reaction: glutamate is first activated by ATP to form Glu-AMP and then transferred to the acceptor end of tRNA(Glu). This is Glutamate--tRNA ligase 1 from Thermoanaerobacter sp. (strain X514).